Reading from the N-terminus, the 393-residue chain is Telomeric repeat-binding factor 2-interacting protein 1 (393 aa).

Residue A2 is modified to N-acetylalanine. 2 positions are modified to phosphoserine: S36 and S43. The region spanning 78–101 (FISTQYILDCVDRNEKLDLEAYRL) is the BRCT domain. Residues 104–132 (TEQASDPKPGASTEGSTEPEPQPLTGRIA) are disordered. A Glycyl lysine isopeptide (Lys-Gly) (interchain with G-Cter in SUMO2) cross-link involves residue K111. Positions 125–185 (QPLTGRIAYT…SLKDRYLKHL (61 aa)) constitute a Myb-like domain. Phosphoserine is present on residues S151 and S153. K191 is covalently cross-linked (Glycyl lysine isopeptide (Lys-Gly) (interchain with G-Cter in SUMO2)). The interval 193 to 304 (LLGNAPVSPS…EEEPKVSTQE (112 aa)) is disordered. Phosphoserine is present on residues S200 and S203. Residues K205, K209, and K237 each participate in a glycyl lysine isopeptide (Lys-Gly) (interchain with G-Cter in SUMO2) cross-link. Basic and acidic residues predominate over residues 223 to 252 (QNKRAPDLPEEECVKGEIKENGEADNKLFE). Positions 282–297 (TPEEDSETQPDEEEEE) are enriched in acidic residues. Residue K366 forms a Glycyl lysine isopeptide (Lys-Gly) (interchain with G-Cter in SUMO2) linkage. Residues 377-393 (KKFGAQNVARRIEFRKK) carry the Nuclear localization signal motif.

This sequence belongs to the RAP1 family. As to quaternary structure, homodimer. Component of the shelterin complex (telosome) composed of TERF1, TERF2, TINF2, TERF2IP ACD and POT1. Binds to TERF2 (but not TERF1) with its C-terminus. Interacts with SLX4/BTBD12. Interacts with TERF2; the interaction is direct. Does not interact with TERF1. Associates with the I-kappa-B-kinase (IKK) core complex, composed of CHUK, IKBKB and IKBKG.

Its subcellular location is the nucleus. It localises to the cytoplasm. The protein resides in the chromosome. It is found in the telomere. Acts both as a regulator of telomere function and as a transcription regulator. Involved in the regulation of telomere length and protection as a component of the shelterin complex (telosome). In contrast to other components of the shelterin complex, it is dispensible for telomere capping and does not participate in the protection of telomeres against non-homologous end-joining (NHEJ)-mediated repair. Instead, it is required to negatively regulate telomere recombination and is essential for repressing homology-directed repair (HDR), which can affect telomere length. Does not bind DNA directly: recruited to telomeric double-stranded 5'-TTAGGG-3' repeats via its interaction with TERF2. Independently of its function in telomeres, also acts as a transcription regulator: recruited to extratelomeric 5'-TTAGGG-3' sites via its association with TERF2 or other factors, and regulates gene expression. When cytoplasmic, associates with the I-kappa-B-kinase (IKK) complex and acts as a regulator of the NF-kappa-B signaling by promoting IKK-mediated phosphorylation of RELA/p65, leading to activate expression of NF-kappa-B target genes. The polypeptide is Telomeric repeat-binding factor 2-interacting protein 1 (Terf2ip) (Mus musculus (Mouse)).